The sequence spans 84 residues: Small ribosomal subunit protein uS17 (84 aa).

This sequence belongs to the universal ribosomal protein uS17 family. Part of the 30S ribosomal subunit.

Its function is as follows. One of the primary rRNA binding proteins, it binds specifically to the 5'-end of 16S ribosomal RNA. The protein is Small ribosomal subunit protein uS17 of Borreliella burgdorferi (strain ATCC 35210 / DSM 4680 / CIP 102532 / B31) (Borrelia burgdorferi).